Consider the following 418-residue polypeptide: Gamma-glutamyl phosphate reductase (418 aa).

This sequence belongs to the gamma-glutamyl phosphate reductase family.

Its subcellular location is the cytoplasm. It carries out the reaction L-glutamate 5-semialdehyde + phosphate + NADP(+) = L-glutamyl 5-phosphate + NADPH + H(+). The protein operates within amino-acid biosynthesis; L-proline biosynthesis; L-glutamate 5-semialdehyde from L-glutamate: step 2/2. Its function is as follows. Catalyzes the NADPH-dependent reduction of L-glutamate 5-phosphate into L-glutamate 5-semialdehyde and phosphate. The product spontaneously undergoes cyclization to form 1-pyrroline-5-carboxylate. The chain is Gamma-glutamyl phosphate reductase from Aliivibrio fischeri (strain MJ11) (Vibrio fischeri).